The chain runs to 154 residues: UPF0178 protein H16_B0290 (154 aa).

It belongs to the UPF0178 family.

The polypeptide is UPF0178 protein H16_B0290 (Cupriavidus necator (strain ATCC 17699 / DSM 428 / KCTC 22496 / NCIMB 10442 / H16 / Stanier 337) (Ralstonia eutropha)).